Consider the following 586-residue polypeptide: MQAGARFQRRRRQLQQQQPRRRQPLLWPMDAEPPPPPPWVWMVPGSAGLLRLSAGVVVPPVLLASAPPPAAPLLPGLPGWPAPSEPVLPLLPLPSAPDSAAAAAAHPFPALHGQWLFGGHSPSLGLPPSSTVELVPVFPHLCPSALATPIGKSWIDKRIPNCKIFFNNSFALDSTWIHPEESRFFHGHEKPRLLANQVAVSLSRPAPASRPLPTVVLAPQPIPGGCHNSLKVTSSPAIAIATAAAAAMVSVDPENLRGPSPSSVQPRHFLTLAPIKIPLRTSPVSDTRTERGRVARPPALMLRAQKSRDGDKEDKEPPPMLGGGEDSTARGNRPVASTPVPGSPWCVVWTGDDRVFFFNPTMHLSVWEKPMDLKDRGDLNRIIEDPPHKRKLEAPATDNSDGSSSEDNREDQDVKTKRNRTEGCGSPKPEEAKREDKGTRTPPPQILLPLEERVTHFRDMLLERGVSAFSTWEKELHKIVFDPRYLLLNSEERKQIFEQFVKTRIKEEYKEKKSKLLLAKEEFKKLLEESKVSPRTTFKEFAEKYGRDQRFRLVQKRKDQEHFFNQFILILKKRDKENRLRLRKMR.

Positions 1 to 30 (MQAGARFQRRRRQLQQQQPRRRQPLLWPMD) are disordered. A compositionally biased stretch (basic residues) spans 7-23 (FQRRRRQLQQQQPRRRQ). The WW 1 domain occupies 148 to 181 (TPIGKSWIDKRIPNCKIFFNNSFALDSTWIHPEE). 2 disordered regions span residues 281–344 (TSPV…PGSP) and 378–448 (DLNR…QILL). A compositionally biased stretch (basic and acidic residues) spans 306-317 (KSRDGDKEDKEP). Residues 339–372 (PVPGSPWCVVWTGDDRVFFFNPTMHLSVWEKPMD) form the WW 2 domain. 3 stretches are compositionally biased toward basic and acidic residues: residues 378-387 (DLNRIIEDPP), 411-421 (DQDVKTKRNRT), and 428-439 (KPEEAKREDKGT). FF domains follow at residues 450–503 (LEER…FVKT) and 515–570 (KLLL…FILI).

The polypeptide is Transcription elongation regulator 1-like protein (TCERG1L) (Homo sapiens (Human)).